The following is a 348-amino-acid chain: Holliday junction branch migration complex subunit RuvB (348 aa).

Positions 4-198 (TTDYGASNTG…FGFTAHLDFY (195 aa)) are large ATPase domain (RuvB-L). Residues leucine 37, arginine 38, glycine 79, lysine 82, threonine 83, threonine 84, 145–147 (EDF), arginine 188, tyrosine 198, and arginine 235 each bind ATP. Threonine 83 contacts Mg(2+). The interval 199-269 (PHEELEKLIE…DVKEALALYQ (71 aa)) is small ATPAse domain (RuvB-S). The head domain (RuvB-H) stretch occupies residues 272–348 (SEGLDRLDIA…DIIFGNYAQR (77 aa)). Residues arginine 327 and arginine 332 each contribute to the DNA site.

The protein belongs to the RuvB family. As to quaternary structure, homohexamer. Forms an RuvA(8)-RuvB(12)-Holliday junction (HJ) complex. HJ DNA is sandwiched between 2 RuvA tetramers; dsDNA enters through RuvA and exits via RuvB. An RuvB hexamer assembles on each DNA strand where it exits the tetramer. Each RuvB hexamer is contacted by two RuvA subunits (via domain III) on 2 adjacent RuvB subunits; this complex drives branch migration. In the full resolvosome a probable DNA-RuvA(4)-RuvB(12)-RuvC(2) complex forms which resolves the HJ.

The protein localises to the cytoplasm. It carries out the reaction ATP + H2O = ADP + phosphate + H(+). Its function is as follows. The RuvA-RuvB-RuvC complex processes Holliday junction (HJ) DNA during genetic recombination and DNA repair, while the RuvA-RuvB complex plays an important role in the rescue of blocked DNA replication forks via replication fork reversal (RFR). RuvA specifically binds to HJ cruciform DNA, conferring on it an open structure. The RuvB hexamer acts as an ATP-dependent pump, pulling dsDNA into and through the RuvAB complex. RuvB forms 2 homohexamers on either side of HJ DNA bound by 1 or 2 RuvA tetramers; 4 subunits per hexamer contact DNA at a time. Coordinated motions by a converter formed by DNA-disengaged RuvB subunits stimulates ATP hydrolysis and nucleotide exchange. Immobilization of the converter enables RuvB to convert the ATP-contained energy into a lever motion, pulling 2 nucleotides of DNA out of the RuvA tetramer per ATP hydrolyzed, thus driving DNA branch migration. The RuvB motors rotate together with the DNA substrate, which together with the progressing nucleotide cycle form the mechanistic basis for DNA recombination by continuous HJ branch migration. Branch migration allows RuvC to scan DNA until it finds its consensus sequence, where it cleaves and resolves cruciform DNA. This is Holliday junction branch migration complex subunit RuvB from Bifidobacterium longum (strain DJO10A).